The primary structure comprises 342 residues: Phosphate acyltransferase (342 aa).

It belongs to the PlsX family. Homodimer. Probably interacts with PlsY.

It localises to the cytoplasm. The enzyme catalyses a fatty acyl-[ACP] + phosphate = an acyl phosphate + holo-[ACP]. The protein operates within lipid metabolism; phospholipid metabolism. In terms of biological role, catalyzes the reversible formation of acyl-phosphate (acyl-PO(4)) from acyl-[acyl-carrier-protein] (acyl-ACP). This enzyme utilizes acyl-ACP as fatty acyl donor, but not acyl-CoA. This is Phosphate acyltransferase from Shewanella baltica (strain OS155 / ATCC BAA-1091).